Reading from the N-terminus, the 2193-residue chain is ATP-dependent helicase BRM (2193 aa).

Residue Met1 is modified to N-acetylmethionine. Residues 1-10 (MQSGGSGGGP) are compositionally biased toward gly residues. 5 disordered regions span residues 1-126 (MQSG…QEGQ), 175-231 (MQDL…PGNM), 293-466 (QKAG…GFTK), 511-558 (SPAI…DNVG), and 580-649 (TSTD…ASAR). Over residues 23–62 (ASTSSAASPSSSSSSVQQQQQQQQQQQQQQQLASRQQQQQ) the composition is skewed to low complexity. Residues 38 to 58 (VQQQQQQQQQQQQQQQLASRQ) adopt a coiled-coil conformation. The span at 79–88 (GVQGMMGGGN) shows a compositional bias: gly residues. 3 stretches are compositionally biased toward low complexity: residues 91 to 102 (SSPGSMQMPQQS), 110 to 126 (QQQQQQQQQGSSTQEGQ), and 180 to 192 (PSSQPQASSSKPS). Positions 204-223 (ESSSQQRNETKSHPQQQVGT) are enriched in polar residues. The segment covering 301–320 (ASQSPSIPISSQPASSSVVP) has biased composition (low complexity). Composition is skewed to polar residues over residues 325-339 (PHANSASDISGQSGS), 347-358 (STGSFASTSSPR), 383-412 (QPTNGMPSGNPLQTSANETPVLDQNASTKK), and 421-433 (QMQQPRQLNTPTP). The segment covering 445–463 (SNSSLQSGQGTQQAQQRSG) has biased composition (low complexity). A QLQ domain is found at 463–499 (GFTKQQLHVLKAQILAFRRLKKGEGSLPPELLQAISP). Basic and acidic residues-rich tracts occupy residues 517–537 (VQDRSSDKTGEDQARSLECGK) and 611–621 (PRSDSTADKGK). Residues 626–638 (DGSQSKVPPQANS) show a composition bias toward polar residues. The Nuclear localization signal 1 signature appears at 705–712 (LKKINGLL). A coiled-coil region spans residues 726-795 (VLRLQIEEKK…QKAVREKQLK (70 aa)). Positions 993-1158 (LSLYNNKLNG…WSLLNLLLPD (166 aa)) constitute a Helicase ATP-binding domain. Residue 1006–1013 (DEMGLGKT) participates in ATP binding. Residues 1109-1129 (DEAQRMKDRESVLARDLDRYR) are a coiled coil. The 178-residue stretch at 1312-1489 (ILDRILIKLQ…QYKIDMADEV (178 aa)) folds into the Helicase C-terminal domain. 2 disordered regions span residues 1583–1775 (SKKP…DEEQ) and 1789–1894 (LRPR…NAGA). Residues 1608 to 1617 (KRGRPKSKKI) are compositionally biased toward basic residues. A coiled-coil region spans residues 1618–1638 (NYKEIEDDIAGYSEESSEERN). Ser1641 carries the post-translational modification Phosphoserine. Acidic residues predominate over residues 1642-1657 (GNEEEGDIRQFDDDEL). The span at 1821–1832 (TVVDSHSSRQDQ) shows a compositional bias: basic and acidic residues. Residues 1833–1842 (SDSSSRLRSV) show a composition bias toward low complexity. Polar residues-rich tracts occupy residues 1848–1870 (ASTSKLHVSSPKSGRLNATQLTV) and 1882–1892 (DGTSPISSSNA). One can recognise a Bromo domain in the interval 1895–2005 (RMSHIIQKRC…NLFFDLLKMS (111 aa)). The Nuclear localization signal 2 motif lies at 1901–1908 (QKRCKIVI). Polar residues predominate over residues 2022–2032 (GSAPTLVSTPT). The tract at residues 2022–2193 (GSAPTLVSTP…DSGKRRPSHL (172 aa)) is disordered. Ser2137 carries the post-translational modification Phosphoserine. A compositionally biased stretch (polar residues) spans 2149 to 2166 (LAQQQRWPNQPTHPNNSG).

It belongs to the SNF2/RAD54 helicase family. In terms of assembly, interacts with SWI3B, SWI3C, H3 and H4, but not with SWI3A, SWI3D or BSH. Interacts with LFY. Interacts with REF6. Binds to FGT1. In terms of tissue distribution, highly expressed in inflorescences and leaves. Low expression in siliques, roots and seedlings. Detected in shoot apical meristem, root meristem, vascular tissue of developing leaves, petals, stamens filaments, anthers and carpels.

It localises to the nucleus. It carries out the reaction ATP + H2O = ADP + phosphate + H(+). ATPase subunit of a multiprotein complex equivalent of the SWI/SNF complex that acts by remodeling the chromatin by catalyzing an ATP-dependent alteration in the structure of nucleosomal DNA. Represses embryonic genes in leaves and controls shoot development and flowering. Activates flower homeotic genes. The association of BRM with its target genes requires REF6. Necessary to acquire heat stress (HS) memory, by globally binding to HS memory genes. This chain is ATP-dependent helicase BRM, found in Arabidopsis thaliana (Mouse-ear cress).